We begin with the raw amino-acid sequence, 362 residues long: 3-ketodihydrosphingosine reductase gsl-3 (362 aa).

Residue Leu-55 participates in NADP(+) binding. 4 residues coordinate NADPH: Gly-58, Ser-60, Gly-62, and Arg-83. The GXSXG motif lies at 58–62 (GASEG). An NADP(+)-binding site is contributed by Asn-84. NADPH-binding residues include Arg-87 and Asp-113. Residues Asp-113, Arg-176, Tyr-216, Lys-220, Ile-252, and Ser-254 each contribute to the NADP(+) site. The Proton acceptor role is filled by Tyr-216. Residue Lys-220 is the Lowers pKa of active site Tyr of the active site. Residues 318–338 (NNWVLDTLMGWLIPIIYFFVL) traverse the membrane as a helical segment.

Belongs to the short-chain dehydrogenases/reductases (SDR) family.

The protein resides in the endoplasmic reticulum membrane. It carries out the reaction sphinganine + NADP(+) = 3-oxosphinganine + NADPH + H(+). It functions in the pathway lipid metabolism; sphingolipid metabolism. Catalyzes the reduction of 3'-oxosphinganine (3-ketodihydrosphingosine/KDS) to sphinganine (dihydrosphingosine/DHS), the second step of de novo sphingolipid biosynthesis. The protein is 3-ketodihydrosphingosine reductase gsl-3 (gsl-3) of Neurospora crassa (strain ATCC 24698 / 74-OR23-1A / CBS 708.71 / DSM 1257 / FGSC 987).